The following is a 119-amino-acid chain: Large ribosomal subunit protein bL20 (119 aa).

This sequence belongs to the bacterial ribosomal protein bL20 family.

In terms of biological role, binds directly to 23S ribosomal RNA and is necessary for the in vitro assembly process of the 50S ribosomal subunit. It is not involved in the protein synthesizing functions of that subunit. This chain is Large ribosomal subunit protein bL20, found in Ruthia magnifica subsp. Calyptogena magnifica.